The following is a 210-amino-acid chain: Scoloptoxin SSD552 (210 aa).

The first 23 residues, 1–23, serve as a signal peptide directing secretion; it reads MNILLSSTLFVLLMFQIIGSGMG.

In terms of processing, contains 3 disulfide bonds. As to expression, expressed by the venom gland.

It is found in the secreted. This Scolopendra dehaani (Thai centipede) protein is Scoloptoxin SSD552.